Here is a 105-residue protein sequence, read N- to C-terminus: Flagellar transcriptional regulator FlhD (105 aa).

Belongs to the FlhD family. Homodimer; disulfide-linked. Forms a heterohexamer composed of two FlhC and four FlhD subunits. Each FlhC binds a FlhD dimer, forming a heterotrimer, and a hexamer assembles by dimerization of two heterotrimers.

Its subcellular location is the cytoplasm. Functions in complex with FlhC as a master transcriptional regulator that regulates transcription of several flagellar and non-flagellar operons by binding to their promoter region. Activates expression of class 2 flagellar genes, including fliA, which is a flagellum-specific sigma factor that turns on the class 3 genes. Also regulates genes whose products function in a variety of physiological pathways. The polypeptide is Flagellar transcriptional regulator FlhD (Cupriavidus pinatubonensis (strain JMP 134 / LMG 1197) (Cupriavidus necator (strain JMP 134))).